A 171-amino-acid polypeptide reads, in one-letter code: Protein TIFY 11d (171 aa).

Residues proline 65 to serine 100 form the Tify domain. The Jas signature appears at proline 117 to tyrosine 142. The short motif at alanine 119–arginine 126 is the Nuclear localization signal element.

Belongs to the TIFY/JAZ family. As to quaternary structure, interacts with BHLH148 and COI1A. Interacts with COI1A, COI1B and COI2 in a coronatine-dependent manner. Coronatine is an analog of jasmonoyl isoleucine (JA-Ile). Post-translationally, ubiquitinated. Increase in jasmonoyl isoleucine (JA-Ile) levels mediates its degradation via COI1A-mediated proteasome pathway.

Its subcellular location is the nucleus. Its function is as follows. Repressor of jasmonate (JA) responses. May act on an initial response of JA-regulated gene expression toward drought tolerance as part of a BHLH148-TIFY11D/JAZ12-COI1A complex. In Oryza sativa subsp. japonica (Rice), this protein is Protein TIFY 11d.